The chain runs to 310 residues: Malate dehydrogenase (310 aa).

NAD(+) contacts are provided by residues 7-12 and Asp-32; that span reads GAGNVG. Substrate contacts are provided by Arg-81 and Arg-87. NAD(+) contacts are provided by residues Asn-94 and 117 to 119; that span reads VSN. Residues Asn-119 and Arg-150 each contribute to the substrate site. His-174 (proton acceptor) is an active-site residue.

It belongs to the LDH/MDH superfamily. MDH type 3 family. As to quaternary structure, homotetramer; arranged as a dimer of dimers.

It carries out the reaction (S)-malate + NAD(+) = oxaloacetate + NADH + H(+). In terms of biological role, catalyzes the reversible oxidation of malate to oxaloacetate. The sequence is that of Malate dehydrogenase from Chlorobaculum parvum (strain DSM 263 / NCIMB 8327) (Chlorobium vibrioforme subsp. thiosulfatophilum).